A 219-amino-acid chain; its full sequence is Ribose-5-phosphate isomerase A (219 aa).

Substrate contacts are provided by residues 28–31 (TGST), 81–84 (DGAD), and 94–97 (KGGG). The active-site Proton acceptor is the Glu103. Residue Lys121 coordinates substrate.

It belongs to the ribose 5-phosphate isomerase family. As to quaternary structure, homodimer.

It carries out the reaction aldehydo-D-ribose 5-phosphate = D-ribulose 5-phosphate. The protein operates within carbohydrate degradation; pentose phosphate pathway; D-ribose 5-phosphate from D-ribulose 5-phosphate (non-oxidative stage): step 1/1. Catalyzes the reversible conversion of ribose-5-phosphate to ribulose 5-phosphate. In Shewanella frigidimarina (strain NCIMB 400), this protein is Ribose-5-phosphate isomerase A.